A 220-amino-acid chain; its full sequence is MMDEKELYEKWKRTVEMLKAEGIIKSEKVERAFLKCPRYLFVEDRYKKYAHVDEPLPIPAGQTISAPHMVAIMLEIADLKPGMNVLEVGTGSGWNAALIAEIVKGDVYSIERIPELVEFAKRNLERAGVKNVHVILGDGSKGFPPKSPYDAIIVTAGAPEIPKPLVEQLKPGGKLIIPVGSYHLWQELLEVIKREDGSIKIKNHGGVAFVPLIGEHGWRE.

Residue Ser-65 is part of the active site.

The protein belongs to the methyltransferase superfamily. L-isoaspartyl/D-aspartyl protein methyltransferase family.

It is found in the cytoplasm. The enzyme catalyses [protein]-L-isoaspartate + S-adenosyl-L-methionine = [protein]-L-isoaspartate alpha-methyl ester + S-adenosyl-L-homocysteine. Its function is as follows. Catalyzes the methyl esterification of L-isoaspartyl residues in peptides and proteins that result from spontaneous decomposition of normal L-aspartyl and L-asparaginyl residues. It plays a role in the repair and/or degradation of damaged proteins. The sequence is that of Protein-L-isoaspartate O-methyltransferase (pcm) from Pyrococcus horikoshii (strain ATCC 700860 / DSM 12428 / JCM 9974 / NBRC 100139 / OT-3).